The primary structure comprises 355 residues: Probable butyrate kinase (355 aa).

Belongs to the acetokinase family.

It is found in the cytoplasm. It catalyses the reaction butanoate + ATP = butanoyl phosphate + ADP. This chain is Probable butyrate kinase, found in Listeria welshimeri serovar 6b (strain ATCC 35897 / DSM 20650 / CCUG 15529 / CIP 8149 / NCTC 11857 / SLCC 5334 / V8).